The following is a 241-amino-acid chain: Xyloglucan-specific endo-beta-1,4-glucanase 1 (241 aa).

An N-terminal signal peptide occupies residues 1–19 (MKGLLAGTIAAATFAVASA). Glu136 is an active-site residue. Asn174 and Asn190 each carry an N-linked (GlcNAc...) asparagine glycan. The active site involves Glu222.

It belongs to the glycosyl hydrolase 12 (cellulase H) family. As to quaternary structure, interacts with host apoplastic glucanase inhibitor GIP2.

It catalyses the reaction xyloglucan + H2O = xyloglucan oligosaccharides.. Its activity is regulated as follows. The xyloglucanase activity is inhibited by the binding of the host apoplastic glucanase inhibitor GIP2. Glycoside hydrolase that exhibits xyloglucanase activity. Acts as an important virulence factor during P.parasitica infection of its host Nicotiana benthamiana. Also acts as a pathogen-associated molecular pattern (PAMP) in host species, where it can trigger defense responses including cell death. The PAMP activity is independent of its xyloglucanase activity. With paralog XLP1, is required to elevate apoplastic sugar during P.parasitica infection. In Phytophthora nicotianae (strain INRA-310) (Phytophthora parasitica), this protein is Xyloglucan-specific endo-beta-1,4-glucanase 1.